Reading from the N-terminus, the 396-residue chain is 1-deoxy-D-xylulose 5-phosphate reductoisomerase (396 aa).

NADPH-binding residues include Thr-10, Gly-11, Ser-12, Ile-13, and Asn-123. Lys-124 lines the 1-deoxy-D-xylulose 5-phosphate pocket. An NADPH-binding site is contributed by Glu-125. Mn(2+) is bound at residue Asp-149. The 1-deoxy-D-xylulose 5-phosphate site is built by Ser-150, Glu-151, Ser-185, and His-208. Glu-151 is a binding site for Mn(2+). Residue Gly-214 participates in NADPH binding. The 1-deoxy-D-xylulose 5-phosphate site is built by Ser-221, Asn-226, Lys-227, and Glu-230. Glu-230 is a binding site for Mn(2+).

The protein belongs to the DXR family. The cofactor is Mg(2+). Mn(2+) is required as a cofactor.

The enzyme catalyses 2-C-methyl-D-erythritol 4-phosphate + NADP(+) = 1-deoxy-D-xylulose 5-phosphate + NADPH + H(+). It participates in isoprenoid biosynthesis; isopentenyl diphosphate biosynthesis via DXP pathway; isopentenyl diphosphate from 1-deoxy-D-xylulose 5-phosphate: step 1/6. Its function is as follows. Catalyzes the NADPH-dependent rearrangement and reduction of 1-deoxy-D-xylulose-5-phosphate (DXP) to 2-C-methyl-D-erythritol 4-phosphate (MEP). This Shewanella baltica (strain OS155 / ATCC BAA-1091) protein is 1-deoxy-D-xylulose 5-phosphate reductoisomerase.